Consider the following 257-residue polypeptide: 6-phosphogluconolactonase (257 aa).

Alanine 2 carries the post-translational modification N-acetylalanine. The residue at position 49 (serine 49) is a Phosphoserine. Position 180 is an N6-acetyllysine (lysine 180).

This sequence belongs to the glucosamine/galactosamine-6-phosphate isomerase family. 6-phosphogluconolactonase subfamily.

The protein localises to the cytoplasm. The enzyme catalyses 6-phospho-D-glucono-1,5-lactone + H2O = 6-phospho-D-gluconate + H(+). The protein operates within carbohydrate degradation; pentose phosphate pathway; D-ribulose 5-phosphate from D-glucose 6-phosphate (oxidative stage): step 2/3. Hydrolysis of 6-phosphogluconolactone to 6-phosphogluconate. In Rattus norvegicus (Rat), this protein is 6-phosphogluconolactonase.